The primary structure comprises 372 residues: tRNA-specific 2-thiouridylase MnmA (372 aa).

Residues 16-23 and Met42 contribute to the ATP site; that span reads GMSGGVDS. The interval 102–104 is interaction with target base in tRNA; that stretch reads NPD. Cys107 functions as the Nucleophile in the catalytic mechanism. Cys107 and Cys205 are joined by a disulfide. Residue Gly132 participates in ATP binding. The tract at residues 155–157 is interaction with tRNA; the sequence is KDQ. Cys205 acts as the Cysteine persulfide intermediate in catalysis. The segment at 317–318 is interaction with tRNA; sequence RY.

This sequence belongs to the MnmA/TRMU family.

The protein localises to the cytoplasm. It carries out the reaction S-sulfanyl-L-cysteinyl-[protein] + uridine(34) in tRNA + AH2 + ATP = 2-thiouridine(34) in tRNA + L-cysteinyl-[protein] + A + AMP + diphosphate + H(+). Its function is as follows. Catalyzes the 2-thiolation of uridine at the wobble position (U34) of tRNA, leading to the formation of s(2)U34. In Shewanella sp. (strain MR-4), this protein is tRNA-specific 2-thiouridylase MnmA.